The sequence spans 392 residues: Bifunctional enzyme Fae/Hps (392 aa).

A formaldehyde-activating enzyme region spans residues 1–161 (MFQIGEALMG…EESNKSTHAI (161 aa)). The Proton donor role is filled by histidine 17. Aspartate 19, leucine 48, lysine 66, threonine 68, and glutamine 83 together coordinate substrate. The tract at residues 162 to 392 (MGFKVTRLWD…IDQFRVMTDF (231 aa)) is 3-hexulose-6-phosphate synthase.

It in the N-terminal section; belongs to the formaldehyde-activating enzyme family. This sequence in the C-terminal section; belongs to the HPS/KGPDC family. HPS subfamily.

It catalyses the reaction 5,6,7,8-tetrahydromethanopterin + formaldehyde = 5,10-methylenetetrahydromethanopterin + H2O. The catalysed reaction is D-ribulose 5-phosphate + formaldehyde = D-arabino-hex-3-ulose 6-phosphate. The protein operates within carbohydrate biosynthesis; D-ribose 5-phosphate biosynthesis. Functionally, catalyzes the condensation of formaldehyde with tetrahydromethanopterin (H(4)MPT) to 5,10-methylenetetrahydromethanopterin. In terms of biological role, catalyzes the reversible formation of ribulose-5-phosphate and formaldehyde from 3-hexulose-6-phosphate. This Methanosarcina mazei (strain ATCC BAA-159 / DSM 3647 / Goe1 / Go1 / JCM 11833 / OCM 88) (Methanosarcina frisia) protein is Bifunctional enzyme Fae/Hps.